We begin with the raw amino-acid sequence, 610 residues long: Pentatricopeptide repeat-containing protein At3g15590, mitochondrial (610 aa).

A mitochondrion-targeting transit peptide spans 1-71; sequence MYSLSRILQR…FSRFFGIHKL (71 aa). The disordered stretch occupies residues 88–142; sequence EELSESEEAVPVSGDVPEGVVDDDSLFEPELGSDNDDLEIEEKHSKDGGKPTKKR. Residues 107 to 127 show a composition bias toward acidic residues; sequence VVDDDSLFEPELGSDNDDLEI. Positions 128–137 are enriched in basic and acidic residues; the sequence is EEKHSKDGGK. PPR repeat units follow at residues 241 to 275, 276 to 309, 310 to 344, 345 to 379, 380 to 410, 412 to 442, 447 to 481, 482 to 517, and 518 to 552; these read GEVVYRTLLANCVLKHHVNKAEDIFNKMKELKFPT, SVFACNQLLLLYSMHDRKKISDVLLLMERENIKP, SRATYHFLINSKGLAGDITGMEKIVETIKEEGIEL, DPELQSILAKYYIRAGLKERAQDLMKEIEGKGLQQ, TPWVCRSLLPLYADIGDSDNVRRLSRFVDQN, RYDNCISAIKAWGKLKEVEEAEAVFERLVEK, PMMPYFALMEIYTENKMLAKGRDLVKRMGNAGIAI, GPSTWHALVKLYIKAGEVGKAELILNRATKDNKMRP, and MFTTYMAILEEYAKRGDVHNTEKVFMKMKRASYAA.

Belongs to the PPR family. P subfamily.

It is found in the mitochondrion. This Arabidopsis thaliana (Mouse-ear cress) protein is Pentatricopeptide repeat-containing protein At3g15590, mitochondrial.